The sequence spans 445 residues: Na(+)-translocating NADH-quinone reductase subunit A (445 aa).

The protein belongs to the NqrA family. In terms of assembly, composed of six subunits; NqrA, NqrB, NqrC, NqrD, NqrE and NqrF.

The catalysed reaction is a ubiquinone + n Na(+)(in) + NADH + H(+) = a ubiquinol + n Na(+)(out) + NAD(+). Functionally, NQR complex catalyzes the reduction of ubiquinone-1 to ubiquinol by two successive reactions, coupled with the transport of Na(+) ions from the cytoplasm to the periplasm. NqrA to NqrE are probably involved in the second step, the conversion of ubisemiquinone to ubiquinol. The protein is Na(+)-translocating NADH-quinone reductase subunit A of Pseudomonas aeruginosa (strain UCBPP-PA14).